A 1581-amino-acid chain; its full sequence is Calmodulin-regulated spectrin-associated protein 1 (1581 aa).

Positions 215–330 (ESPAHQKVRY…FIAELFWWFE (116 aa)) constitute a Calponin-homology (CH) domain. Phosphoserine is present on residues serine 216, serine 370, serine 374, and serine 415. The tract at residues 351-399 (VLQQKSSRPPVPISNATKRSFLGSPAAMSPADQPPSTQPLAEGSHRYHL) is disordered. The tract at residues 424 to 470 (RQKQQKVSQTEEIPDQRHRSNSLTRVDGQPRGAIGAWPDKKNRPVSQ) is disordered. Threonine 511 is subject to Phosphothreonine. A phosphoserine mark is found at serine 550, serine 553, serine 560, serine 572, and serine 586. Basic and acidic residues predominate over residues 603–617 (KQITTKEDERGEGRP). The segment at 603-649 (KQITTKEDERGEGRPRTIMAKRPSEGSQPMVRKKVSGGHGSRDLNRT) is disordered. Phosphoserine occurs at positions 626, 718, 724, 734, and 736. The span at 765–785 (ESAKLQEDMKVKEHEDKDDAS) shows a compositional bias: basic and acidic residues. Disordered stretches follow at residues 765-803 (ESAK…SMSM) and 821-866 (LNSC…SKDP). Low complexity-rich tracts occupy residues 792-803 (LSTTSQLSSMSM) and 826-837 (TKSSTSSSQKTT). The span at 853-865 (QKREQSPGRHSKD) shows a compositional bias: basic and acidic residues. Residues 867–888 (ASLLASELVQLHMQLEEKRRAI) are sufficient for interaction with SPTBN1. 2 coiled-coil regions span residues 869-905 (LLAS…QRLK) and 1005-1037 (DVNE…QEQL). Residues 899 to 918 (SARQRLKLGKAAFLHVVKKG) are sufficient for interaction with calmodulin. Disordered regions lie at residues 1064-1143 (FVEP…ELPE), 1225-1251 (PDED…PGVG), 1288-1315 (QLEA…EEEK), and 1332-1428 (QALE…DWET). A Phosphoserine modification is found at serine 1069. The segment covering 1092 to 1103 (RPAELKVPKDRQ) has biased composition (basic and acidic residues). The span at 1104–1132 (QGCSRSKTPTPSVETLPQSRSLPPSTHPR) shows a compositional bias: polar residues. At serine 1133 the chain carries Phosphoserine. Over residues 1225–1237 (PDEDGEVVGHESS) the composition is skewed to basic and acidic residues. Residues 1265–1336 (AKKRAAFLLK…RRKQQQALEE (72 aa)) are a coiled coil. Residues 1342-1353 (PKSKPKKPRPKS) show a composition bias toward basic residues. Positions 1361–1372 (SDSGTKCSSTHN) are enriched in polar residues. The span at 1373–1390 (LSQTHSGSSLSLASAATT) shows a compositional bias: low complexity. A phosphoserine mark is found at serine 1378 and serine 1407. The CKK domain occupies 1443–1576 (GPKLFKEPSS…QPKRPTVPKK (134 aa)). Residue tyrosine 1516 is modified to Phosphotyrosine.

Belongs to the CAMSAP1 family. As to quaternary structure, interacts with spectrin via SPTBN1; the interaction is direct. Interacts with calmodulin; calcium-dependent it prevents interaction with spectrin. In terms of tissue distribution, expressed in the central nervous system.

The protein localises to the cytoplasm. It is found in the cytoskeleton. Functionally, key microtubule-organizing protein that specifically binds the minus-end of non-centrosomal microtubules and regulates their dynamics and organization. Specifically recognizes growing microtubule minus-ends and stabilizes microtubules. Acts on free microtubule minus-ends that are not capped by microtubule-nucleating proteins or other factors and protects microtubule minus-ends from depolymerization. In contrast to CAMSAP2 and CAMSAP3, tracks along the growing tips of minus-end microtubules without significantly affecting the polymerization rate: binds at the very tip of the microtubules minus-end and acts as a minus-end tracking protein (-TIP) that dissociates from microtubules after allowing tubulin incorporation. Through interaction with spectrin may regulate neurite outgrowth. This Mus musculus (Mouse) protein is Calmodulin-regulated spectrin-associated protein 1 (Camsap1).